Here is a 354-residue protein sequence, read N- to C-terminus: Nicotinate-nucleotide--dimethylbenzimidazole phosphoribosyltransferase (354 aa).

Residue Glu-322 is the Proton acceptor of the active site.

The protein belongs to the CobT family.

The enzyme catalyses 5,6-dimethylbenzimidazole + nicotinate beta-D-ribonucleotide = alpha-ribazole 5'-phosphate + nicotinate + H(+). It participates in nucleoside biosynthesis; alpha-ribazole biosynthesis; alpha-ribazole from 5,6-dimethylbenzimidazole: step 1/2. In terms of biological role, catalyzes the synthesis of alpha-ribazole-5'-phosphate from nicotinate mononucleotide (NAMN) and 5,6-dimethylbenzimidazole (DMB). This is Nicotinate-nucleotide--dimethylbenzimidazole phosphoribosyltransferase from Solidesulfovibrio magneticus (strain ATCC 700980 / DSM 13731 / RS-1) (Desulfovibrio magneticus).